The primary structure comprises 309 residues: NAD kinase (309 aa).

Residue Asp-89 is the Proton acceptor of the active site. NAD(+)-binding positions include 89-90 (DG), 163-164 (NE), His-174, Arg-191, Asp-193, and 204-209 (TAYALS).

This sequence belongs to the NAD kinase family. Requires a divalent metal cation as cofactor.

It localises to the cytoplasm. It carries out the reaction NAD(+) + ATP = ADP + NADP(+) + H(+). Functionally, involved in the regulation of the intracellular balance of NAD and NADP, and is a key enzyme in the biosynthesis of NADP. Catalyzes specifically the phosphorylation on 2'-hydroxyl of the adenosine moiety of NAD to yield NADP. The chain is NAD kinase from Shewanella sp. (strain W3-18-1).